Here is a 142-residue protein sequence, read N- to C-terminus: Hemoglobin subunit alpha-2 (142 aa).

Ser1 is modified (N-acetylserine). The Globin domain occupies 1-142; it reads SLSTKDKETV…LSRALSEKYR (142 aa). His59 lines the O2 pocket. Position 88 (His88) interacts with heme b.

The protein belongs to the globin family. Hb2 is a heterotetramer of two alpha-2 chains and two beta chains. In terms of tissue distribution, red blood cells.

In terms of biological role, involved in oxygen transport from gills to the various peripheral tissues. The protein is Hemoglobin subunit alpha-2 (hba2) of Trematomus newnesi (Dusky notothen).